Consider the following 185-residue polypeptide: Ribosome-recycling factor (185 aa).

The protein belongs to the RRF family.

Its subcellular location is the cytoplasm. Its function is as follows. Responsible for the release of ribosomes from messenger RNA at the termination of protein biosynthesis. May increase the efficiency of translation by recycling ribosomes from one round of translation to another. This is Ribosome-recycling factor from Edwardsiella ictaluri (strain 93-146).